The chain runs to 690 residues: Translation initiation factor IF-2 (690 aa).

The region spanning Pro178 to Glu346 is the tr-type G domain. The tract at residues Gly187–Thr194 is G1. GTP is bound at residue Gly187 to Thr194. Residues Gly212–Ser216 are G2. The segment at Asp233–Gly236 is G3. GTP is bound by residues Asp233–His237 and Asn287–Asp290. The segment at Asn287–Asp290 is G4. The G5 stretch occupies residues Ser324–Arg326.

The protein belongs to the TRAFAC class translation factor GTPase superfamily. Classic translation factor GTPase family. IF-2 subfamily.

The protein resides in the cytoplasm. Its function is as follows. One of the essential components for the initiation of protein synthesis. Protects formylmethionyl-tRNA from spontaneous hydrolysis and promotes its binding to the 30S ribosomal subunits. Also involved in the hydrolysis of GTP during the formation of the 70S ribosomal complex. In Thermotoga sp. (strain RQ2), this protein is Translation initiation factor IF-2.